A 376-amino-acid polypeptide reads, in one-letter code: MDRNKSFDPNLFKRVDINLLKRNDQLIGKPTTNSIEIIKRLFQNKWAILFFLLIVVIVLLAIIVPLTSPFSAVTPVSTNALAQNLPPRYLWHKPGDILVHKITARSIAEISQASGVLVGTLPSANSNPLATNVQYDIAPFQLQELRNYFPLLGTNGLGIDIWTLLWASVAKSLWIAVVVAIIAMVFGTIYGAVAGSFVGHMADNIMSRIIEIIDIVPSILWIIVLGATFRFGGVKQFDDSVVIFTLIFVFWTWPATTTRIYILKNKDTEYIQAAKTLGAHQIRIIFVHMLPVVFGRLAVVFVSLIPAVIGYEASLVFLGLKPATDIGLGALLNQVTSSDNVALILSSIVSFAVLTVAARTFANALNDAIDPRVVKR.

Helical transmembrane passes span 46 to 66, 149 to 169, 173 to 193, 209 to 229, 242 to 262, 297 to 317, and 341 to 361; these read WAILFFLLIVVIVLLAIIVPL, FPLLGTNGLGIDIWTLLWASV, LWIAVVVAIIAMVFGTIYGAV, IIEIIDIVPSILWIIVLGATF, VIFTLIFVFWTWPATTTRIYI, LAVVFVSLIPAVIGYEASLVF, and VALILSSIVSFAVLTVAARTF. Residues 169-366 enclose the ABC transmembrane type-1 domain; sequence VAKSLWIAVV…AARTFANALN (198 aa).

The protein belongs to the binding-protein-dependent transport system permease family. OppBC subfamily. As to quaternary structure, the complex is composed of two ATP-binding proteins (OppD and OppF), two transmembrane proteins (OppB and OppC) and a solute-binding protein (OppA).

It localises to the cell membrane. Part of the ABC transporter complex OppABCDF involved in the uptake of oligopeptides. Probably responsible for the translocation of the substrate across the membrane. The polypeptide is Oligopeptide transport system permease protein OppC (oppC) (Mycoplasma genitalium (strain ATCC 33530 / DSM 19775 / NCTC 10195 / G37) (Mycoplasmoides genitalium)).